The primary structure comprises 393 residues: MSRKNYVFTSESVSEGHPDKLCDRISDAVLDAFIAEEPEARVAAETFATTNRVVIGGEVGLSDKDKLHDYMDRIEAIARACIKDIGYEQDKFHHATCQVTNLLHEQSAHIAQGVDAAKGKDEGAGDQGIMFGYASNETPELMPAPIHYAHAVLRRLAEVRKDGTEPTLRPDAKSQLSVRYEDGKPVGVTSVVLSTQHADESQTSDDIRAIVEPYIREVLPDGWITGDTEWWVNPTGTFVIGGPDGDAGLTGRKIIVDTYGGAAPHGGGAFSGKDPTKVDRSAAYVARYLAKNVVAAGLANKCTIQLSYAIGVSKPLSIYCDTFGTGEVDEEEIERAIGKVMDLTPRGIREHLHLNKPIYERTAAYGHFGRAPDADGGFSWEKTDLADVLKAAL.

Residue histidine 17 coordinates ATP. Aspartate 19 contacts Mg(2+). Glutamate 45 is a K(+) binding site. L-methionine contacts are provided by glutamate 58 and glutamine 106. Residues 106 to 116 (QSAHIAQGVDA) form a flexible loop region. Residues 171–173 (DAK), aspartate 246, 252–253 (RK), alanine 269, and lysine 273 contribute to the ATP site. Aspartate 246 contributes to the L-methionine binding site. L-methionine is bound at residue lysine 277.

This sequence belongs to the AdoMet synthase family. Homotetramer; dimer of dimers. Requires Mg(2+) as cofactor. K(+) is required as a cofactor.

It is found in the cytoplasm. The enzyme catalyses L-methionine + ATP + H2O = S-adenosyl-L-methionine + phosphate + diphosphate. It participates in amino-acid biosynthesis; S-adenosyl-L-methionine biosynthesis; S-adenosyl-L-methionine from L-methionine: step 1/1. Functionally, catalyzes the formation of S-adenosylmethionine (AdoMet) from methionine and ATP. The overall synthetic reaction is composed of two sequential steps, AdoMet formation and the subsequent tripolyphosphate hydrolysis which occurs prior to release of AdoMet from the enzyme. In Roseobacter denitrificans (strain ATCC 33942 / OCh 114) (Erythrobacter sp. (strain OCh 114)), this protein is S-adenosylmethionine synthase.